A 342-amino-acid polypeptide reads, in one-letter code: Oxygen-dependent coproporphyrinogen-III oxidase (342 aa).

Serine 107 serves as a coordination point for substrate. Positions 111 and 121 each coordinate a divalent metal cation. Catalysis depends on histidine 121, which acts as the Proton donor. Asparagine 123 to arginine 125 contacts substrate. A divalent metal cation-binding residues include histidine 155 and histidine 185. Residues tyrosine 277 to glutamate 312 form an important for dimerization region.

This sequence belongs to the aerobic coproporphyrinogen-III oxidase family. As to quaternary structure, homodimer. It depends on a divalent metal cation as a cofactor.

It is found in the cytoplasm. The catalysed reaction is coproporphyrinogen III + O2 + 2 H(+) = protoporphyrinogen IX + 2 CO2 + 2 H2O. It participates in porphyrin-containing compound metabolism; protoporphyrin-IX biosynthesis; protoporphyrinogen-IX from coproporphyrinogen-III (O2 route): step 1/1. In terms of biological role, involved in the heme and chlorophyll biosynthesis. Catalyzes the aerobic oxidative decarboxylation of propionate groups of rings A and B of coproporphyrinogen-III to yield the vinyl groups in protoporphyrinogen-IX. This is Oxygen-dependent coproporphyrinogen-III oxidase from Synechococcus sp. (strain ATCC 27144 / PCC 6301 / SAUG 1402/1) (Anacystis nidulans).